Reading from the N-terminus, the 178-residue chain is Large ribosomal subunit protein bL25 (178 aa).

The protein belongs to the bacterial ribosomal protein bL25 family. CTC subfamily. In terms of assembly, part of the 50S ribosomal subunit; part of the 5S rRNA/L5/L18/L25 subcomplex. Contacts the 5S rRNA. Binds to the 5S rRNA independently of L5 and L18.

This is one of the proteins that binds to the 5S RNA in the ribosome where it forms part of the central protuberance. In Helicobacter pylori (strain ATCC 700392 / 26695) (Campylobacter pylori), this protein is Large ribosomal subunit protein bL25.